The chain runs to 193 residues: Imidazoleglycerol-phosphate dehydratase (193 aa).

This sequence belongs to the imidazoleglycerol-phosphate dehydratase family.

It is found in the cytoplasm. It catalyses the reaction D-erythro-1-(imidazol-4-yl)glycerol 3-phosphate = 3-(imidazol-4-yl)-2-oxopropyl phosphate + H2O. It functions in the pathway amino-acid biosynthesis; L-histidine biosynthesis; L-histidine from 5-phospho-alpha-D-ribose 1-diphosphate: step 6/9. In Staphylococcus carnosus (strain TM300), this protein is Imidazoleglycerol-phosphate dehydratase.